The following is a 314-amino-acid chain: tRNA pseudouridine synthase B (314 aa).

H43 is a substrate binding site. Catalysis depends on D48, which acts as the Nucleophile. 3 residues coordinate substrate: Y76, Y179, and L200.

The protein belongs to the pseudouridine synthase TruB family. Type 1 subfamily.

It catalyses the reaction uridine(55) in tRNA = pseudouridine(55) in tRNA. Functionally, responsible for synthesis of pseudouridine from uracil-55 in the psi GC loop of transfer RNAs. This chain is tRNA pseudouridine synthase B, found in Salmonella paratyphi A (strain ATCC 9150 / SARB42).